The following is a 344-amino-acid chain: uncharacterized protein (344 aa).

The next 8 membrane-spanning stretches (helical) occupy residues 25 to 45 (GAGW…VGAV), 68 to 88 (FVDA…ADGV), 104 to 124 (GVVP…GWNC), 133 to 153 (SACA…GVGA), 161 to 181 (GVGT…LAVV), 224 to 244 (LGAF…DAAL), 276 to 296 (VFAL…PAAL), and 302 to 322 (LVTA…LAGV).

The protein belongs to the peptidase S58 family.

It is found in the cell membrane. Functionally, aminopeptidase. This is an uncharacterized protein from Mycobacterium bovis (strain ATCC BAA-935 / AF2122/97).